Reading from the N-terminus, the 664-residue chain is Macoilin (664 aa).

4 helical membrane-spanning segments follow: residues 28–48 (TFLYLKFLVVWALVLLADFVL), 75–95 (AFSVFFVCVAFTSNIICLLFI), 120–140 (VCLPTVSLWILFVYIEAAIRF), and 154–174 (FAAHCIGYPVVTLGFGFKSYV). Over residues 253–265 (REKGKEKDKDAKK) the composition is skewed to basic and acidic residues. Residues 253-274 (REKGKEKDKDAKKHNLGINNNN) are disordered. S305 is subject to Phosphoserine. The segment covering 320–348 (KNYKNASGVVNSSPRSHSATNGSIPSSSS) has biased composition (polar residues). Residues 320 to 367 (KNYKNASGVVNSSPRSHSATNGSIPSSSSKNEKKQKCTSKSPSAHKDL) are disordered. N-linked (GlcNAc...) asparagine glycosylation is present at N324. S332 bears the Phosphoserine mark. N-linked (GlcNAc...) asparagine glycans are attached at residues N340 and N452. S631 and S634 each carry phosphoserine. Positions 631 to 664 (SPLSPVSPHYSSKFVETSPSGLDPNASVYQPLKK) are disordered. A glycan (N-linked (GlcNAc...) asparagine) is linked at N655.

It belongs to the macoilin family.

The protein resides in the rough endoplasmic reticulum membrane. It is found in the nucleus membrane. In terms of biological role, plays a role in the regulation of neuronal activity. In Bos taurus (Bovine), this protein is Macoilin (MACO1).